Reading from the N-terminus, the 827-residue chain is Disintegrin and metalloproteinase domain-containing protein 17 (827 aa).

A signal peptide spans 1–17 (MRQRLLFLTTLVPFVLA). Positions 18 to 214 (PRPPEEPGSG…SEEFVRRVKR (197 aa)) are excised as a propeptide. N-linked (GlcNAc...) asparagine glycosylation occurs at Asn-157. The Cysteine switch motif lies at 182–189 (KVCGYLNA). Cys-184 is a binding site for Zn(2+). Residues 215 to 671 (RAEPNPLKNT…NTFGKFLADN (457 aa)) are Extracellular-facing. In terms of domain architecture, Peptidase M12B spans 223 to 474 (NTCKLLVVAD…KAQECFQERS (252 aa)). Intrachain disulfides connect Cys-225–Cys-333, Cys-365–Cys-469, and Cys-423–Cys-453. The N-linked (GlcNAc...) asparagine glycan is linked to Asn-264. A Zn(2+)-binding site is contributed by His-405. Residue Glu-406 is part of the active site. Zn(2+) is bound by residues His-409 and His-415. N-linked (GlcNAc...) asparagine glycosylation is found at Asn-452, Asn-498, Asn-539, and Asn-551. The Disintegrin domain maps to 475 to 563 (NKVCGNSRVD…ECPPPGDAED (89 aa)). 4 disulfides stabilise this stretch: Cys-534–Cys-555, Cys-573–Cys-582, Cys-578–Cys-591, and Cys-593–Cys-600. The interval 603-671 (CCRNLSGPCV…NTFGKFLADN (69 aa)) is crambin-like. A glycan (N-linked (GlcNAc...) asparagine) is linked at Asn-606. The helical transmembrane segment at 672 to 692 (IVGSVLVFSLIFWIPFSILVH) threads the bilayer. The Cytoplasmic segment spans residues 693–827 (CVDKKLDKQY…SRVDSKETEC (135 aa)). The SH3-binding signature appears at 731–738 (PAPQTPGR). Thr-735 carries the post-translational modification Phosphothreonine; by MAPK14. Thr-764 bears the Phosphothreonine mark. The interval 766–827 (QEDPSTDSHV…SRVDSKETEC (62 aa)) is disordered. Ser-770 bears the Phosphoserine mark. Composition is skewed to basic and acidic residues over residues 771–784 (TDSH…EKDP), 794–810 (SFED…EKAA), and 818–827 (SRVDSKETEC). Residues Ser-794 and Ser-822 each carry the phosphoserine modification.

In terms of assembly, interacts with MAD2L1, MAPK14 and MUC1. Interacts with iRhom1/RHBDF1 and iRhom2/RHBDF2. Interacts with FRMD8 via its interaction with iRhom1/RHBDF1 and iRhom2/RHBDF2. Interacts with TSPAN8. Requires Zn(2+) as cofactor. In terms of processing, the precursor is cleaved by a furin endopeptidase. Phosphorylated. Stimulation by growth factor or phorbol 12-myristate 13-acetate induces phosphorylation of Ser-822 but decreases phosphorylation of Ser-794. Phosphorylation at Thr-735 by MAPK14 is required for ADAM17-mediated ectodomain shedding.

The protein localises to the membrane. It catalyses the reaction Narrow endopeptidase specificity. Cleaves Pro-Leu-Ala-Gln-Ala-|-Val-Arg-Ser-Ser-Ser in the membrane-bound, 26-kDa form of tumor necrosis factor alpha (TNFalpha). Similarly cleaves other membrane-anchored, cell-surface proteins to 'shed' the extracellular domains.. Functionally, transmembrane metalloprotease which mediates the ectodomain shedding of a myriad of transmembrane proteins including adhesion proteins, growth factor precursors and cytokines important for inflammation and immunity. Cleaves the membrane-bound precursor of TNF-alpha to its mature soluble form. Responsible for the proteolytical release of soluble JAM3 from endothelial cells surface. Responsible for the proteolytic release of several other cell-surface proteins, including p75 TNF-receptor, interleukin 1 receptor type II, p55 TNF-receptor, transforming growth factor-alpha, L-selectin, growth hormone receptor, MUC1 and the amyloid precursor protein. Acts as an activator of Notch pathway by mediating cleavage of Notch, generating the membrane-associated intermediate fragment called Notch extracellular truncation (NEXT). Plays a role in the proteolytic processing of ACE2. Plays a role in hemostasis through shedding of GP1BA, the platelet glycoprotein Ib alpha chain. Mediates the proteolytic cleavage of LAG3, leading to release the secreted form of LAG3. Mediates the proteolytic cleavage of IL6R, leading to the release of secreted form of IL6R. Mediates the proteolytic cleavage and shedding of FCGR3A upon NK cell stimulation, a mechanism that allows for increased NK cell motility and detachment from opsonized target cells. Cleaves TREM2, resulting in shedding of the TREM2 ectodomain. The chain is Disintegrin and metalloproteinase domain-containing protein 17 (Adam17) from Rattus norvegicus (Rat).